The sequence spans 372 residues: Ribosomal RNA small subunit methyltransferase H (372 aa).

Residues 78–80 (GGH), Asp97, Tyr124, Asp148, and Gln155 each bind S-adenosyl-L-methionine.

It belongs to the methyltransferase superfamily. RsmH family.

Its subcellular location is the cytoplasm. It carries out the reaction cytidine(1402) in 16S rRNA + S-adenosyl-L-methionine = N(4)-methylcytidine(1402) in 16S rRNA + S-adenosyl-L-homocysteine + H(+). Specifically methylates the N4 position of cytidine in position 1402 (C1402) of 16S rRNA. In Mycobacterium leprae (strain Br4923), this protein is Ribosomal RNA small subunit methyltransferase H.